Consider the following 465-residue polypeptide: Cytochrome c peroxidase Ccp (465 aa).

Residues 1 to 6 (MKMVSR) are Cytoplasmic-facing. The helical transmembrane segment at 7 to 27 (ITAIGLAGVAICYLGLSGYVW) threads the bilayer. Topologically, residues 28 to 465 (YHDNKRSKQA…VYTPYMQDKQ (438 aa)) are periplasmic. Cytochrome c domains follow at residues 42 to 155 (SAVS…AKQR), 185 to 287 (QKVA…EKDP), and 337 to 454 (AQQK…HSLN). Residues cysteine 59, cysteine 62, histidine 63, methionine 125, cysteine 207, cysteine 210, histidine 211, cysteine 351, cysteine 354, histidine 355, and methionine 429 each coordinate heme c.

As to quaternary structure, the recombinant enzyme lacking its transmembrane domain is a monomer in solution. Requires heme c as cofactor.

The protein resides in the cell inner membrane. Its activity is regulated as follows. Does not require reductive activation for maximum activity, as peroxidatic heme is high-spin His/OH(-) 6-coordinated. Calcium ions are needed to attain maximum peroxidase activity. Its function is as follows. Cytochrome peroxidase that enables anaerobic respiration with H(2)O(2) as a terminal electron acceptor. It receives electrons from the quinol pool. Menaquinol is probably the electron donor in vivo. It can use menadiol (a menaquinol analog), hydroquinone, duroquinol and the artificial electron donor ABTS(2-) in vitro, but only menadiol and hydroquinone can efficiently transfer electrons to Ccp, maintaining the catalytic activity of the enzyme. It enables E.coli to grow on a nonfermentable carbon source when H(2)O(2) is supplied. Plays a role in the peroxide stress response under anaerobic conditions. However, it does not degrade H(2)O(2) quickly enough to lower the periplasmic H(2)O(2) level below that of the surrounding medium and protect the cell from its toxic effects. The polypeptide is Cytochrome c peroxidase Ccp (Escherichia coli (strain K12)).